Here is a 360-residue protein sequence, read N- to C-terminus: Nucleoporin SEH1-B (360 aa).

WD repeat units follow at residues 10–49 (DHKD…NWHC), 55–96 (THSG…SNDK), 111–152 (DSRT…NLSQ), 160–210 (SCKL…RKYA), 217–258 (SVSD…KELS), and 276–315 (NHNS…NWKC).

It belongs to the WD repeat SEC13 family. As to quaternary structure, component of the Nup107-160 subcomplex of the nuclear pore complex (NPC). The Nup107-160 subcomplex includes NUP160, NUP133, NUP107, NUP98, NUP85, NUP43, NUP37, SEH1 and SEC13. Component of the GATOR2 subcomplex, composed of MIOS, SEC13, SEH1L, WDR24 and WDR59. The GATOR2 complex interacts with CASTOR1 and CASTOR2; the interaction is negatively regulated by arginine. The GATOR2 complex interacts with SESN1, SESN2 and SESN3; the interaction is negatively regulated by amino acids.

The protein localises to the chromosome. It is found in the centromere. It localises to the kinetochore. The protein resides in the nucleus. Its subcellular location is the nuclear pore complex. The protein localises to the lysosome membrane. Its activity is regulated as follows. The GATOR2 complex is negatively regulated by the upstream amino acid sensors CASTOR1 and SESN2, which sequester the GATOR2 complex in absence of amino acids. In the presence of abundant amino acids, GATOR2 is released from CASTOR1 and SESN2 and activated. Functionally, component of the Nup107-160 subcomplex of the nuclear pore complex (NPC). The Nup107-160 subcomplex is required for the assembly of a functional NPC. The Nup107-160 subcomplex is also required for normal kinetochore microtubule attachment, mitotic progression and chromosome segregation. This subunit plays a role in recruitment of the Nup107-160 subcomplex to the kinetochore. In terms of biological role, as a component of the GATOR2 complex, functions as an activator of the amino acid-sensing branch of the mTORC1 signaling pathway. The GATOR2 complex indirectly activates mTORC1 through the inhibition of the GATOR1 subcomplex. GATOR2 probably acts as an E3 ubiquitin-protein ligase toward GATOR1. In the presence of abundant amino acids, the GATOR2 complex mediates ubiquitination of the NPRL2 core component of the GATOR1 complex, leading to GATOR1 inactivation. In the absence of amino acids, GATOR2 is inhibited, activating the GATOR1 complex. The sequence is that of Nucleoporin SEH1-B (seh1l-b) from Xenopus laevis (African clawed frog).